A 498-amino-acid polypeptide reads, in one-letter code: Glycerol kinase (498 aa).

Thr-12 serves as a coordination point for ADP. Residues Thr-12, Thr-13, and Ser-14 each contribute to the ATP site. Thr-12 serves as a coordination point for sn-glycerol 3-phosphate. ADP is bound at residue Arg-16. 4 residues coordinate sn-glycerol 3-phosphate: Arg-82, Glu-83, Tyr-134, and Asp-244. Residues Arg-82, Glu-83, Tyr-134, Asp-244, and Gln-245 each contribute to the glycerol site. Residues Thr-266 and Gly-310 each coordinate ADP. Positions 266, 310, 314, and 411 each coordinate ATP. The ADP site is built by Gly-411 and Asn-415.

It belongs to the FGGY kinase family.

The catalysed reaction is glycerol + ATP = sn-glycerol 3-phosphate + ADP + H(+). The protein operates within polyol metabolism; glycerol degradation via glycerol kinase pathway; sn-glycerol 3-phosphate from glycerol: step 1/1. Inhibited by fructose 1,6-bisphosphate (FBP). Functionally, key enzyme in the regulation of glycerol uptake and metabolism. Catalyzes the phosphorylation of glycerol to yield sn-glycerol 3-phosphate. The chain is Glycerol kinase from Azorhizobium caulinodans (strain ATCC 43989 / DSM 5975 / JCM 20966 / LMG 6465 / NBRC 14845 / NCIMB 13405 / ORS 571).